Reading from the N-terminus, the 500-residue chain is Prostacyclin synthase (500 aa).

A helical transmembrane segment spans residues 1-20 (MAWAALLGLLAALLLLLLLS). Residues Arg-106, Leu-112, Asn-287, 358-359 (TR), and Arg-382 contribute to the substrate site. Cys-441 serves as a coordination point for heme.

The protein belongs to the cytochrome P450 family. Requires heme as cofactor. As to expression, widely expressed; particularly abundant in ovary, heart, skeletal muscle, lung and prostate.

The protein resides in the endoplasmic reticulum membrane. The enzyme catalyses prostaglandin H2 = prostaglandin I2. It catalyses the reaction a hydroperoxyeicosatetraenoate = an oxoeicosatetraenoate + H2O. The catalysed reaction is (15S)-hydroperoxy-(5Z,8Z,11Z,13E)-eicosatetraenoate = 15-oxo-(5Z,8Z,11Z,13E)-eicosatetraenoate + H2O. It carries out the reaction (15S)-hydroperoxy-(5Z,8Z,11Z,13E)-eicosatetraenoate + AH2 = (15S)-hydroxy-(5Z,8Z,11Z,13E)-eicosatetraenoate + A + H2O. Its function is as follows. Catalyzes the biosynthesis and metabolism of eicosanoids. Catalyzes the isomerization of prostaglandin H2 to prostacyclin (= prostaglandin I2), a potent mediator of vasodilation and inhibitor of platelet aggregation. Additionally, displays dehydratase activity, toward hydroperoxyeicosatetraenoates (HPETEs), especially toward (15S)-hydroperoxy-(5Z,8Z,11Z,13E)-eicosatetraenoate (15(S)-HPETE). The chain is Prostacyclin synthase (PTGIS) from Homo sapiens (Human).